The chain runs to 403 residues: Alkaline protease 1 (403 aa).

Residues 1 to 21 (MLSIKRTLLLLGAVLPAVFGA) form the signal peptide. The propeptide occupies 22–125 (PVQETRRAAQ…QIWYLDALTT (104 aa)). The 85-residue stretch at 36–120 (KYIVTFKPGT…HVEEDQIWYL (85 aa)) folds into the Inhibitor I9 domain. A Peptidase S8 domain is found at 130 to 403 (PWGLGSISHK…PNKLAYNGNA (274 aa)). Residues Asp-162 and His-193 each act as charge relay system in the active site. 2 N-linked (GlcNAc...) asparagine glycosylation sites follow: Asn-253 and Asn-307. The Charge relay system role is filled by Ser-349. An N-linked (GlcNAc...) asparagine glycan is attached at Asn-367.

Belongs to the peptidase S8 family.

It is found in the secreted. The catalysed reaction is Hydrolysis of proteins with broad specificity, and of Bz-Arg-OEt &gt; Ac-Tyr-OEt. Does not hydrolyze peptide amides.. Its function is as follows. Secreted alkaline protease that allows assimilation of proteinaceous substrates. Acts as a significant virulence factor in invasive aspergillosis. Involved in immune evasion from the human and mice complement systems during infection. Efficiently cleaves important components of the complement cascade such as such as C3, C4, C5, and C1q, as well as IgG, which leads to down-regulation of complement activation at the hyphal surface. The protein is Alkaline protease 1 (alp1) of Aspergillus fumigatus (strain CBS 144.89 / FGSC A1163 / CEA10) (Neosartorya fumigata).